We begin with the raw amino-acid sequence, 200 residues long: Methyl-coenzyme M reductase I operon protein C (200 aa).

MCR is composed of three subunits: alpha, beta, and gamma. The function of proteins C and D is not known.

The sequence is that of Methyl-coenzyme M reductase I operon protein C (mcrC) from Methanocaldococcus jannaschii (strain ATCC 43067 / DSM 2661 / JAL-1 / JCM 10045 / NBRC 100440) (Methanococcus jannaschii).